The chain runs to 497 residues: Methionine--tRNA ligase (497 aa).

The 'HIGH' region motif lies at 14–24 (YYVNDVPHLGH). Positions 129, 132, 147, and 150 each coordinate Zn(2+). Positions 295–299 (KMSKT) match the 'KMSKS' region motif. ATP is bound at residue Lys-298.

Belongs to the class-I aminoacyl-tRNA synthetase family. MetG type 2A subfamily. Monomer. The cofactor is Zn(2+).

It is found in the cytoplasm. The catalysed reaction is tRNA(Met) + L-methionine + ATP = L-methionyl-tRNA(Met) + AMP + diphosphate. Is required not only for elongation of protein synthesis but also for the initiation of all mRNA translation through initiator tRNA(fMet) aminoacylation. This Aquifex aeolicus (strain VF5) protein is Methionine--tRNA ligase (metG).